The following is a 116-amino-acid chain: uncharacterized protein (116 aa).

The chain crosses the membrane as a helical span at residues 58–78 (IIVDFKFIFQIFLILSFGFFA).

The protein localises to the membrane. This is an uncharacterized protein from Rickettsia prowazekii (strain Madrid E).